The sequence spans 294 residues: Light-independent protochlorophyllide reductase iron-sulfur ATP-binding protein (294 aa).

Residues 10–15 (GIGKST) and Lys-39 contribute to the ATP site. Position 14 (Ser-14) interacts with Mg(2+). Residues Cys-95 and Cys-129 each contribute to the [4Fe-4S] cluster site. ATP is bound at residue 180 to 181 (NR).

The protein belongs to the NifH/BchL/ChlL family. In terms of assembly, homodimer. Protochlorophyllide reductase is composed of three subunits; ChlL, ChlN and ChlB. [4Fe-4S] cluster is required as a cofactor.

The protein localises to the plastid. It localises to the chloroplast. It carries out the reaction chlorophyllide a + oxidized 2[4Fe-4S]-[ferredoxin] + 2 ADP + 2 phosphate = protochlorophyllide a + reduced 2[4Fe-4S]-[ferredoxin] + 2 ATP + 2 H2O. Its pathway is porphyrin-containing compound metabolism; chlorophyll biosynthesis (light-independent). Functionally, component of the dark-operative protochlorophyllide reductase (DPOR) that uses Mg-ATP and reduced ferredoxin to reduce ring D of protochlorophyllide (Pchlide) to form chlorophyllide a (Chlide). This reaction is light-independent. The L component serves as a unique electron donor to the NB-component of the complex, and binds Mg-ATP. The chain is Light-independent protochlorophyllide reductase iron-sulfur ATP-binding protein from Pleurastrum terricola (Filamentous green alga).